The primary structure comprises 725 residues: Homeobox-leucine zipper protein HDG3 (725 aa).

Positions Met-1–Arg-74 are disordered. A compositionally biased stretch (low complexity) spans Asn-11 to Ser-40. Over residues Asp-46 to Ala-64 the composition is skewed to polar residues. Positions Pro-65–Arg-74 are enriched in basic residues. The homeobox DNA-binding region spans Lys-68–Gln-127. The stretch at Gln-117–Leu-201 forms a coiled coil. In terms of domain architecture, START spans Asp-243–Ser-475.

The protein belongs to the HD-ZIP homeobox family. Class IV subfamily. As to quaternary structure, interacts with AIL7/PLT7, ANT, BBM and AIL1. In terms of tissue distribution, expressed in siliques.

It localises to the nucleus. In terms of biological role, probable transcription factor. Seems to promote cell differentiation. The protein is Homeobox-leucine zipper protein HDG3 of Arabidopsis thaliana (Mouse-ear cress).